The primary structure comprises 205 residues: Cytochrome c biogenesis ATP-binding export protein CcmA (205 aa).

Residues 2-204 (LEVSNLTAIR…SPKLRKIKLG (203 aa)) form the ABC transporter domain. 34–41 (GRNGTGKT) lines the ATP pocket.

This sequence belongs to the ABC transporter superfamily. CcmA exporter (TC 3.A.1.107) family. In terms of assembly, the complex is composed of two ATP-binding proteins (CcmA) and two transmembrane proteins (CcmB).

The protein localises to the cell inner membrane. The catalysed reaction is heme b(in) + ATP + H2O = heme b(out) + ADP + phosphate + H(+). In terms of biological role, part of the ABC transporter complex CcmAB involved in the biogenesis of c-type cytochromes; once thought to export heme, this seems not to be the case, but its exact role is uncertain. Responsible for energy coupling to the transport system. The polypeptide is Cytochrome c biogenesis ATP-binding export protein CcmA (Vibrio vulnificus (strain YJ016)).